Here is a 395-residue protein sequence, read N- to C-terminus: 8-amino-7-oxononanoate synthase (395 aa).

Arg-24 serves as a coordination point for substrate. 111–112 (GF) contacts pyridoxal 5'-phosphate. Position 136 (His-136) interacts with substrate. Pyridoxal 5'-phosphate is bound by residues Ser-184, 209–212 (DDAH), and 240–243 (TLSK). Lys-243 is modified (N6-(pyridoxal phosphate)lysine). Thr-357 lines the substrate pocket.

This sequence belongs to the class-II pyridoxal-phosphate-dependent aminotransferase family. BioF subfamily. In terms of assembly, homodimer. It depends on pyridoxal 5'-phosphate as a cofactor.

It carries out the reaction 6-carboxyhexanoyl-[ACP] + L-alanine + H(+) = (8S)-8-amino-7-oxononanoate + holo-[ACP] + CO2. It participates in cofactor biosynthesis; biotin biosynthesis. Its function is as follows. Catalyzes the decarboxylative condensation of pimeloyl-[acyl-carrier protein] and L-alanine to produce 8-amino-7-oxononanoate (AON), [acyl-carrier protein], and carbon dioxide. The polypeptide is 8-amino-7-oxononanoate synthase (Alkaliphilus metalliredigens (strain QYMF)).